The sequence spans 309 residues: Elongation factor Ts, mitochondrial (309 aa).

This sequence belongs to the EF-Ts family.

Its subcellular location is the mitochondrion. Associates with the EF-Tu.GDP complex and induces the exchange of GDP to GTP. It remains bound to the aminoacyl-tRNA.EF-Tu.GTP complex up to the GTP hydrolysis stage on the ribosome. The sequence is that of Elongation factor Ts, mitochondrial (tsfm) from Salmo salar (Atlantic salmon).